The primary structure comprises 261 residues: Ice-binding protein (261 aa).

The first 20 residues, M1–G20, serve as a signal peptide directing secretion. An N-linked (GlcNAc...) asparagine glycan is attached at N185.

Belongs to the ice-binding protein family. Homodimer. Dimerization is not required for the thermal hysteresis (TH) activity. Post-translationally, glycosylated. Glycosylation is not required for the thermal hysteresis (TH) activity. Glycosylation may increase stability and secretion of this protein.

It is found in the secreted. Its function is as follows. Confers freeze tolerance. Binds to the surface of ice crystals and inhibits their growth. Has low thermal hysteresis (TH) activity, which is the ability to lower the freezing point of an aqueous solution below its melting point. The TH activity of this protein is approximately 0.2 degrees Celsius at 50 uM and 0.3 degrees Celsius at 400 uM. This chain is Ice-binding protein, found in Leucosporidium sp. (strain AY30) (Arctic yeast).